The chain runs to 584 residues: Proline--tRNA ligase (584 aa).

The protein belongs to the class-II aminoacyl-tRNA synthetase family. ProS type 1 subfamily. In terms of assembly, homodimer.

Its subcellular location is the cytoplasm. It catalyses the reaction tRNA(Pro) + L-proline + ATP = L-prolyl-tRNA(Pro) + AMP + diphosphate. In terms of biological role, catalyzes the attachment of proline to tRNA(Pro) in a two-step reaction: proline is first activated by ATP to form Pro-AMP and then transferred to the acceptor end of tRNA(Pro). As ProRS can inadvertently accommodate and process non-cognate amino acids such as alanine and cysteine, to avoid such errors it has two additional distinct editing activities against alanine. One activity is designated as 'pretransfer' editing and involves the tRNA(Pro)-independent hydrolysis of activated Ala-AMP. The other activity is designated 'posttransfer' editing and involves deacylation of mischarged Ala-tRNA(Pro). The misacylated Cys-tRNA(Pro) is not edited by ProRS. The sequence is that of Proline--tRNA ligase from Mycobacterium sp. (strain KMS).